Reading from the N-terminus, the 62-residue chain is Guanine nucleotide-binding protein subunit gamma (62 aa).

Cysteine 59 is subject to Cysteine methyl ester. The S-geranylgeranyl cysteine moiety is linked to residue cysteine 59. The propeptide at 60–62 (SVL) is removed in mature form.

This sequence belongs to the G protein gamma family. G proteins are composed of 3 units, alpha, beta and gamma. Interacts with gpb-1 and gpb-2.

The protein localises to the cell membrane. Functionally, guanine nucleotide-binding proteins (G proteins) are involved as a modulator or transducer in various transmembrane signaling systems. The beta and gamma chains are required for the GTPase activity, for replacement of GDP by GTP, and for G protein-effector interaction. The sequence is that of Guanine nucleotide-binding protein subunit gamma (gpc-1) from Caenorhabditis briggsae.